The primary structure comprises 484 residues: Arginyl-tRNA--protein transferase 1 (484 aa).

This sequence belongs to the R-transferase family.

The enzyme catalyses an N-terminal L-alpha-aminoacyl-[protein] + L-arginyl-tRNA(Arg) = an N-terminal L-arginyl-L-aminoacyl-[protein] + tRNA(Arg) + H(+). In terms of biological role, involved in the post-translational conjugation of arginine to the N-terminal aspartate or glutamate of a protein. This arginylation is required for degradation of the protein via the ubiquitin pathway. Does not arginylate cysteine residues. The polypeptide is Arginyl-tRNA--protein transferase 1 (Ate1) (Drosophila melanogaster (Fruit fly)).